The following is a 219-amino-acid chain: 3-dehydroquinate dehydratase (219 aa).

3-dehydroquinate is bound by residues 28–30 (ELR) and R61. H116 acts as the Proton donor/acceptor in catalysis. Catalysis depends on K142, which acts as the Schiff-base intermediate with substrate. Residues R180 and Q203 each coordinate 3-dehydroquinate.

Belongs to the type-I 3-dehydroquinase family. In terms of assembly, homodimer.

It catalyses the reaction 3-dehydroquinate = 3-dehydroshikimate + H2O. It functions in the pathway metabolic intermediate biosynthesis; chorismate biosynthesis; chorismate from D-erythrose 4-phosphate and phosphoenolpyruvate: step 3/7. Functionally, involved in the third step of the chorismate pathway, which leads to the biosynthesis of aromatic amino acids. Catalyzes the cis-dehydration of 3-dehydroquinate (DHQ) and introduces the first double bond of the aromatic ring to yield 3-dehydroshikimate. The chain is 3-dehydroquinate dehydratase from Aquifex aeolicus (strain VF5).